A 458-amino-acid chain; its full sequence is Light-independent protochlorophyllide reductase subunit N (458 aa).

Residues Cys20, Cys45, and Cys105 each coordinate [4Fe-4S] cluster.

The protein belongs to the BchN/ChlN family. As to quaternary structure, protochlorophyllide reductase is composed of three subunits; ChlL, ChlN and ChlB. Forms a heterotetramer of two ChlB and two ChlN subunits. [4Fe-4S] cluster serves as cofactor.

The protein localises to the plastid. It localises to the chloroplast. It carries out the reaction chlorophyllide a + oxidized 2[4Fe-4S]-[ferredoxin] + 2 ADP + 2 phosphate = protochlorophyllide a + reduced 2[4Fe-4S]-[ferredoxin] + 2 ATP + 2 H2O. Its pathway is porphyrin-containing compound metabolism; chlorophyll biosynthesis (light-independent). In terms of biological role, component of the dark-operative protochlorophyllide reductase (DPOR) that uses Mg-ATP and reduced ferredoxin to reduce ring D of protochlorophyllide (Pchlide) to form chlorophyllide a (Chlide). This reaction is light-independent. The NB-protein (ChlN-ChlB) is the catalytic component of the complex. This is Light-independent protochlorophyllide reductase subunit N from Angiopteris evecta (Mule's foot fern).